A 479-amino-acid chain; its full sequence is Ribosomal RNA small subunit methyltransferase F (479 aa).

S-adenosyl-L-methionine-binding positions include 125-131 (AAAPGSK), Glu-149, Asp-176, and Asp-194. Cys-247 (nucleophile) is an active-site residue.

Belongs to the class I-like SAM-binding methyltransferase superfamily. RsmB/NOP family.

It localises to the cytoplasm. It catalyses the reaction cytidine(1407) in 16S rRNA + S-adenosyl-L-methionine = 5-methylcytidine(1407) in 16S rRNA + S-adenosyl-L-homocysteine + H(+). Its function is as follows. Specifically methylates the cytosine at position 1407 (m5C1407) of 16S rRNA. This Salmonella enteritidis PT4 (strain P125109) protein is Ribosomal RNA small subunit methyltransferase F.